Reading from the N-terminus, the 337-residue chain is Ketol-acid reductoisomerase (NADP(+)) (337 aa).

The KARI N-terminal Rossmann domain maps to 1 to 180; the sequence is MQVYYDKDAD…GGTKGGVIET (180 aa). NADP(+)-binding positions include 24-27, Arg-47, and Ser-51; that span reads YGSQ. Residue His-106 is part of the active site. Gly-132 is a binding site for NADP(+). In terms of domain architecture, KARI C-terminal knotted spans 181–326; that stretch reads TFREETETDL…ARLRAMMPWI (146 aa). Mg(2+) is bound by residues Asp-189, Glu-193, Glu-225, and Glu-229. Residue Ser-250 participates in substrate binding.

This sequence belongs to the ketol-acid reductoisomerase family. Mg(2+) serves as cofactor.

The catalysed reaction is (2R)-2,3-dihydroxy-3-methylbutanoate + NADP(+) = (2S)-2-acetolactate + NADPH + H(+). It catalyses the reaction (2R,3R)-2,3-dihydroxy-3-methylpentanoate + NADP(+) = (S)-2-ethyl-2-hydroxy-3-oxobutanoate + NADPH + H(+). The protein operates within amino-acid biosynthesis; L-isoleucine biosynthesis; L-isoleucine from 2-oxobutanoate: step 2/4. It functions in the pathway amino-acid biosynthesis; L-valine biosynthesis; L-valine from pyruvate: step 2/4. Its function is as follows. Involved in the biosynthesis of branched-chain amino acids (BCAA). Catalyzes an alkyl-migration followed by a ketol-acid reduction of (S)-2-acetolactate (S2AL) to yield (R)-2,3-dihydroxy-isovalerate. In the isomerase reaction, S2AL is rearranged via a Mg-dependent methyl migration to produce 3-hydroxy-3-methyl-2-ketobutyrate (HMKB). In the reductase reaction, this 2-ketoacid undergoes a metal-dependent reduction by NADPH to yield (R)-2,3-dihydroxy-isovalerate. This Neisseria gonorrhoeae (strain ATCC 700825 / FA 1090) protein is Ketol-acid reductoisomerase (NADP(+)).